The sequence spans 205 residues: Large ribosomal subunit protein uL4 (205 aa).

It belongs to the universal ribosomal protein uL4 family. Part of the 50S ribosomal subunit.

In terms of biological role, one of the primary rRNA binding proteins, this protein initially binds near the 5'-end of the 23S rRNA. It is important during the early stages of 50S assembly. It makes multiple contacts with different domains of the 23S rRNA in the assembled 50S subunit and ribosome. Functionally, forms part of the polypeptide exit tunnel. This chain is Large ribosomal subunit protein uL4, found in Thermus thermophilus (strain ATCC BAA-163 / DSM 7039 / HB27).